Reading from the N-terminus, the 277-residue chain is Release factor glutamine methyltransferase (277 aa).

S-adenosyl-L-methionine-binding positions include Gly117–Gly121, Asp140, Trp168, and Asn183. Position 183–186 (Asn183–Tyr186) interacts with substrate.

The protein belongs to the protein N5-glutamine methyltransferase family. PrmC subfamily.

The enzyme catalyses L-glutaminyl-[peptide chain release factor] + S-adenosyl-L-methionine = N(5)-methyl-L-glutaminyl-[peptide chain release factor] + S-adenosyl-L-homocysteine + H(+). Functionally, methylates the class 1 translation termination release factors RF1/PrfA and RF2/PrfB on the glutamine residue of the universally conserved GGQ motif. The polypeptide is Release factor glutamine methyltransferase (Shigella flexneri).